The chain runs to 103 residues: N(4)-acetylcytidine amidohydrolase (103 aa).

An ASCH domain is found at 6-94 (ITFFQRFQND…IAEIYPNQTQ (89 aa)). The active-site Proton acceptor is K21. Residue T24 is the Nucleophile of the active site. E74 serves as the catalytic Proton donor.

It belongs to the N(4)-acetylcytidine amidohydrolase family.

It catalyses the reaction N(4)-acetylcytidine + H2O = cytidine + acetate + H(+). The enzyme catalyses N(4)-acetyl-2'-deoxycytidine + H2O = 2'-deoxycytidine + acetate + H(+). The catalysed reaction is N(4)-acetylcytosine + H2O = cytosine + acetate + H(+). Its function is as follows. Catalyzes the hydrolysis of N(4)-acetylcytidine (ac4C). This Salmonella schwarzengrund (strain CVM19633) protein is N(4)-acetylcytidine amidohydrolase (yqfB).